We begin with the raw amino-acid sequence, 313 residues long: tRNA-cytidine(32) 2-sulfurtransferase (313 aa).

The PP-loop motif signature appears at 50 to 55; that stretch reads SGGKDS. Positions 125, 128, and 216 each coordinate [4Fe-4S] cluster.

This sequence belongs to the TtcA family. In terms of assembly, homodimer. Mg(2+) is required as a cofactor. [4Fe-4S] cluster serves as cofactor.

The protein localises to the cytoplasm. It carries out the reaction cytidine(32) in tRNA + S-sulfanyl-L-cysteinyl-[cysteine desulfurase] + AH2 + ATP = 2-thiocytidine(32) in tRNA + L-cysteinyl-[cysteine desulfurase] + A + AMP + diphosphate + H(+). It participates in tRNA modification. Functionally, catalyzes the ATP-dependent 2-thiolation of cytidine in position 32 of tRNA, to form 2-thiocytidine (s(2)C32). The sulfur atoms are provided by the cysteine/cysteine desulfurase (IscS) system. In Haemophilus influenzae (strain ATCC 51907 / DSM 11121 / KW20 / Rd), this protein is tRNA-cytidine(32) 2-sulfurtransferase.